The chain runs to 210 residues: Histidine biosynthesis bifunctional protein HisIE (210 aa).

The interval 1–106 is phosphoribosyl-AMP cyclohydrolase; sequence MTNYKIDFSK…SCFNTEVPFS (106 aa). The tract at residues 107–210 is phosphoribosyl-ATP pyrophosphohydrolase; the sequence is VQTLAQTVQD…KGERQNIEQW (104 aa).

It in the N-terminal section; belongs to the PRA-CH family. In the C-terminal section; belongs to the PRA-PH family.

It is found in the cytoplasm. It carries out the reaction 1-(5-phospho-beta-D-ribosyl)-ATP + H2O = 1-(5-phospho-beta-D-ribosyl)-5'-AMP + diphosphate + H(+). The catalysed reaction is 1-(5-phospho-beta-D-ribosyl)-5'-AMP + H2O = 1-(5-phospho-beta-D-ribosyl)-5-[(5-phospho-beta-D-ribosylamino)methylideneamino]imidazole-4-carboxamide. The protein operates within amino-acid biosynthesis; L-histidine biosynthesis; L-histidine from 5-phospho-alpha-D-ribose 1-diphosphate: step 2/9. Its pathway is amino-acid biosynthesis; L-histidine biosynthesis; L-histidine from 5-phospho-alpha-D-ribose 1-diphosphate: step 3/9. The protein is Histidine biosynthesis bifunctional protein HisIE (hisI) of Staphylococcus aureus (strain COL).